The primary structure comprises 102 residues: Small ribosomal subunit protein eS24 (102 aa).

Belongs to the eukaryotic ribosomal protein eS24 family.

This Methanococcus maripaludis (strain C7 / ATCC BAA-1331) protein is Small ribosomal subunit protein eS24.